A 218-amino-acid chain; its full sequence is uncharacterized protein (218 aa).

Residues 184-202 (MDREEKRKEKEEKRKRELA) are compositionally biased toward basic and acidic residues. Residues 184 to 218 (MDREEKRKEKEEKRKRELAARQLKRQEKKKQKTSK) are disordered. A compositionally biased stretch (basic residues) spans 205-218 (QLKRQEKKKQKTSK).

This is an uncharacterized protein from Mycoplasma pneumoniae (strain ATCC 29342 / M129 / Subtype 1) (Mycoplasmoides pneumoniae).